The following is a 184-amino-acid chain: ATP synthase subunit b, chloroplastic (184 aa).

A helical transmembrane segment spans residues 26–48; that stretch reads ILATNLINLSVVLGVLIFFGKGV.

The protein belongs to the ATPase B chain family. As to quaternary structure, F-type ATPases have 2 components, F(1) - the catalytic core - and F(0) - the membrane proton channel. F(1) has five subunits: alpha(3), beta(3), gamma(1), delta(1), epsilon(1). F(0) has four main subunits: a(1), b(1), b'(1) and c(10-14). The alpha and beta chains form an alternating ring which encloses part of the gamma chain. F(1) is attached to F(0) by a central stalk formed by the gamma and epsilon chains, while a peripheral stalk is formed by the delta, b and b' chains.

Its subcellular location is the plastid. The protein resides in the chloroplast thylakoid membrane. F(1)F(0) ATP synthase produces ATP from ADP in the presence of a proton or sodium gradient. F-type ATPases consist of two structural domains, F(1) containing the extramembraneous catalytic core and F(0) containing the membrane proton channel, linked together by a central stalk and a peripheral stalk. During catalysis, ATP synthesis in the catalytic domain of F(1) is coupled via a rotary mechanism of the central stalk subunits to proton translocation. In terms of biological role, component of the F(0) channel, it forms part of the peripheral stalk, linking F(1) to F(0). The polypeptide is ATP synthase subunit b, chloroplastic (Acorus calamus (Sweet flag)).